The following is a 396-amino-acid chain: Aspartate aminotransferase (396 aa).

Residues G34, W130, and N183 each contribute to the L-aspartate site. K246 carries the post-translational modification N6-(pyridoxal phosphate)lysine. L-aspartate is bound at residue R374.

This sequence belongs to the class-I pyridoxal-phosphate-dependent aminotransferase family. In terms of assembly, homodimer. Pyridoxal 5'-phosphate is required as a cofactor.

Its subcellular location is the cytoplasm. The enzyme catalyses L-aspartate + 2-oxoglutarate = oxaloacetate + L-glutamate. This chain is Aspartate aminotransferase (aspC), found in Salmonella typhi.